The primary structure comprises 97 residues: Co-chaperonin GroES (97 aa).

This sequence belongs to the GroES chaperonin family. As to quaternary structure, heptamer of 7 subunits arranged in a ring. Interacts with the chaperonin GroEL.

The protein resides in the cytoplasm. Its function is as follows. Together with the chaperonin GroEL, plays an essential role in assisting protein folding. The GroEL-GroES system forms a nano-cage that allows encapsulation of the non-native substrate proteins and provides a physical environment optimized to promote and accelerate protein folding. GroES binds to the apical surface of the GroEL ring, thereby capping the opening of the GroEL channel. The sequence is that of Co-chaperonin GroES from Buchnera aphidicola subsp. Tetraneura caerulescens.